Here is a 240-residue protein sequence, read N- to C-terminus: Probable transcriptional regulatory protein MXAN_7062 (240 aa).

It belongs to the TACO1 family.

The protein resides in the cytoplasm. In Myxococcus xanthus (strain DK1622), this protein is Probable transcriptional regulatory protein MXAN_7062.